An 873-amino-acid polypeptide reads, in one-letter code: Sine oculis-binding protein homolog (873 aa).

Residues 1–14 are compositionally biased toward basic and acidic residues; the sequence is MAEMEKEGRPPENK. The tract at residues 1-26 is disordered; sequence MAEMEKEGRPPENKRSRKPAHPVKRE. FCS-type zinc fingers lie at residues 142–180 and 216–256; these read DDVS…KCFA and FKNN…KCLN. Disordered stretches follow at residues 308-339, 413-484, and 550-646; these read RRKA…DTAN, RGPP…PGAP, and KPPN…PGVL. The span at 318–339 shows a compositional bias: polar residues; it reads AGQSQGPGPSASTTVSPSDTAN. Low complexity predominate over residues 417–433; it reads HHASNPNSPLSNPMLPG. Over residues 460 to 484 the composition is skewed to pro residues; sequence IHPPSTPTMPGNPPGLLPPPPPGAP. The span at 614–625 shows a compositional bias: basic and acidic residues; that stretch reads EHGRSEVVDLTR. The SUMO interaction motif 1 (SIM); mediates the binding to polysumoylated substrates motif lies at 620–624; that stretch reads VVDLT. Ser629 carries the phosphoserine modification. The short motif at 653-657 is the SUMO interaction motif 2 (SIM); mediates the binding to polysumoylated substrates element; it reads VIDLT. A Glycyl lysine isopeptide (Lys-Gly) (interchain with G-Cter in SUMO2) cross-link involves residue Lys677. A Phosphoserine modification is found at Ser699. Positions 730 to 771 are disordered; that stretch reads AAAEGAKSAEPPPEQPPPPPPPAPPKKLLSPEEPAVSELESV. Pro residues predominate over residues 739–754; that stretch reads EPPPEQPPPPPPPAPP.

It belongs to the SOBP family. Interacts (via SIM domains) with SUMO1 and SUMO2.

Its function is as follows. Implicated in development of the cochlea. In Homo sapiens (Human), this protein is Sine oculis-binding protein homolog.